The chain runs to 294 residues: Elongation factor Ts (294 aa).

Residues 80–83 are involved in Mg(2+) ion dislocation from EF-Tu; it reads TDFV.

It belongs to the EF-Ts family.

The protein localises to the cytoplasm. In terms of biological role, associates with the EF-Tu.GDP complex and induces the exchange of GDP to GTP. It remains bound to the aminoacyl-tRNA.EF-Tu.GTP complex up to the GTP hydrolysis stage on the ribosome. In Polynucleobacter asymbioticus (strain DSM 18221 / CIP 109841 / QLW-P1DMWA-1) (Polynucleobacter necessarius subsp. asymbioticus), this protein is Elongation factor Ts.